The primary structure comprises 662 residues: Chromosomal replication initiator protein DnaA (662 aa).

A domain I, interacts with DnaA modulators region spans residues 1–93 (MDDEQNVLAT…QVEGLGVRIA (93 aa)). The interval 93–322 (AAPATPTAER…STPAPANSSA (230 aa)) is domain II. Low complexity predominate over residues 96-105 (ATPTAERAAA). Residues 96–294 (ATPTAERAAA…SDGPVERDDE (199 aa)) form a disordered region. Residues 114–123 (SRPERPRGER) are compositionally biased toward basic and acidic residues. Residues 166–199 (PPAAEYTPAAEYTPAAEYTPAAEYSPEPEYTPAT) are compositionally biased toward low complexity. 2 stretches are compositionally biased toward basic and acidic residues: residues 236–248 (TPRRDGHGPRRDA) and 261–290 (PGDRPLRDTDRPLREPAAGHDVRESDGPVE). A domain III, AAA+ region region spans residues 323–539 (SLNAKYTFET…GALIRVTAFA (217 aa)). The ATP site is built by G367, G369, K370, and T371. A domain IV, binds dsDNA region spans residues 540 to 662 (SLNGQPLDLS…LTARIKQRSR (123 aa)).

Belongs to the DnaA family. In terms of assembly, oligomerizes as a right-handed, spiral filament on DNA at oriC.

It is found in the cytoplasm. Its function is as follows. Plays an essential role in the initiation and regulation of chromosomal replication. ATP-DnaA binds to the origin of replication (oriC) to initiate formation of the DNA replication initiation complex once per cell cycle. Binds the DnaA box (a 9 base pair repeat at the origin) and separates the double-stranded (ds)DNA. Forms a right-handed helical filament on oriC DNA; dsDNA binds to the exterior of the filament while single-stranded (ss)DNA is stabiized in the filament's interior. The ATP-DnaA-oriC complex binds and stabilizes one strand of the AT-rich DNA unwinding element (DUE), permitting loading of DNA polymerase. After initiation quickly degrades to an ADP-DnaA complex that is not apt for DNA replication. Binds acidic phospholipids. In Nocardia farcinica (strain IFM 10152), this protein is Chromosomal replication initiator protein DnaA.